The primary structure comprises 1299 residues: Tubulin polyglutamylase TTLL5 (1299 aa).

The TTL domain maps to 62-407; sequence RYHLSYKIVR…VCQDPAQRAS (346 aa). Residues Lys180, 186 to 187, 208 to 211, and 221 to 223 contribute to the ATP site; these read RG, SRYI, and KFD. Arg186 serves as a coordination point for a protein. Residue Arg247 participates in L-glutamate binding. ATP is bound at residue 268 to 269; that stretch reads TN. L-glutamate-binding residues include Tyr270, Ser271, and Lys293. Positions 353, 366, and 368 each coordinate Mg(2+). A c-MTBD region region spans residues 378-488; that stretch reads PLDLKIKASM…RGGFIRIFPT (111 aa). Position 384 (Lys384) interacts with L-glutamate. Disordered regions lie at residues 589–626, 832–853, 918–941, 1088–1130, and 1217–1275; these read EMNV…FLRE, GTHS…KGDH, SSVT…IPSA, RSSA…RSLQ, and SSAT…QLNG. Residues 597–617 show a composition bias toward acidic residues; sequence ESEEEEEVALDNEEEEQEASQ. A compositionally biased stretch (low complexity) spans 838 to 847; that stretch reads SKNNNSYSDS. 3 stretches are compositionally biased toward polar residues: residues 1104 to 1130, 1217 to 1230, and 1258 to 1275; these read SGPT…RSLQ, SSAT…TTLP, and ATSQ…QLNG.

The protein belongs to the tubulin--tyrosine ligase family. As to quaternary structure, interacts with the transcriptional coactivators NCOA1/SRC-1 and NCOA2/TIF2. Mg(2+) is required as a cofactor.

It localises to the cell projection. The protein localises to the cilium. Its subcellular location is the cytoplasm. It is found in the cytoskeleton. The protein resides in the cilium basal body. It localises to the nucleus. The catalysed reaction is L-glutamyl-[protein] + L-glutamate + ATP = gamma-L-glutamyl-L-glutamyl-[protein] + ADP + phosphate + H(+). It carries out the reaction (L-glutamyl)(n)-gamma-L-glutamyl-L-glutamyl-[protein] + L-glutamate + ATP = (L-glutamyl)(n+1)-gamma-L-glutamyl-L-glutamyl-[protein] + ADP + phosphate + H(+). In terms of biological role, polyglutamylase which modifies tubulin, generating polyglutamate side chains on the gamma-carboxyl group of specific glutamate residues within the C-terminal tail of tubulin. Preferentially mediates ATP-dependent initiation step of the polyglutamylation reaction over the elongation step. Preferentially modifies the alpha-tubulin tail over a beta-tail. Required for CCSAP localization to both polyglutamylated spindle and cilia microtubules. Increases the effects of transcriptional coactivator NCOA2/TIF2 in glucocorticoid receptor-mediated repression and induction and in androgen receptor-mediated induction. The polypeptide is Tubulin polyglutamylase TTLL5 (TTLL5) (Pongo abelii (Sumatran orangutan)).